A 959-amino-acid polypeptide reads, in one-letter code: General transcription factor II-I repeat domain-containing protein 1 (959 aa).

Residues lysine 27 and lysine 94 each participate in a glycyl lysine isopeptide (Lys-Gly) (interchain with G-Cter in SUMO2) cross-link. Residues 96-106 are compositionally biased toward basic and acidic residues; sequence PEAEHPKKVQR. Residues 96–117 are disordered; it reads PEAEHPKKVQRGEGGGRSLPRS. One copy of the GTF2I-like 1 repeat lies at 119-213; the sequence is LEHGSDVYLL…LEDGGRDSKA (95 aa). Residues lysine 184, lysine 212, lysine 225, lysine 238, lysine 271, lysine 294, lysine 308, lysine 337, lysine 436, lysine 439, and lysine 443 each participate in a glycyl lysine isopeptide (Lys-Gly) (interchain with G-Cter in SUMO2) cross-link. The tract at residues 230 to 250 is disordered; sequence CGLHGQAPKVPPQDLPPTATS. One copy of the GTF2I-like 2 repeat lies at 342–436; the sequence is IKETEDINTL…FDERIFTGNK (95 aa). A Phosphoserine modification is found at serine 448. Residues 468-492 are disordered; sequence NARSDKGSMSEDCGPGTSGELGGLR. One copy of the GTF2I-like 3 repeat lies at 556-650; sequence DSHGDVIRPL…ELLTEGVKEP (95 aa). Residues lysine 567, lysine 579, lysine 588, lysine 622, lysine 638, and lysine 648 each participate in a glycyl lysine isopeptide (Lys-Gly) (interchain with G-Cter in SUMO2) cross-link. Serine 654 is modified (phosphoserine). The disordered stretch occupies residues 654–679; sequence SQGTASSLGFSPPALPPERDSGDPLV. Residues proline 669, proline 670, aspartate 680, and lysine 684 each participate in a glycyl lysine isopeptide (Lys-Gly) (interchain with G-Cter in SUMO2) cross-link. The residue at position 686 (glutamine 686) is a Phosphoserine. GTF2I-like repeat units follow at residues 696–790 and 793–887; these read LSRI…KPDE and ANRL…ICND. Glycyl lysine isopeptide (Lys-Gly) (interchain with G-Cter in SUMO2) cross-links involve residues isoleucine 701, lysine 724, lysine 732, lysine 772, lysine 774, lysine 787, lysine 829, lysine 889, and lysine 893. Positions 892-927 are disordered; that stretch reads AKDSSIPKRKRKRVSEGNSVSSSSSSSSSSSSNPDS. A Nuclear localization signal motif is present at residues 898 to 905; the sequence is PKRKRKRV. Residues 910–923 show a composition bias toward low complexity; sequence SVSSSSSSSSSSSS.

Belongs to the TFII-I family. In terms of assembly, interacts with the retinoblastoma protein (RB1) via its C-terminus. In terms of tissue distribution, highly expressed in adult skeletal muscle, heart, fibroblast, bone and fetal tissues. Expressed at lower levels in all other tissues tested.

It is found in the nucleus. May be a transcription regulator involved in cell-cycle progression and skeletal muscle differentiation. May repress GTF2I transcriptional functions, by preventing its nuclear residency, or by inhibiting its transcriptional activation. May contribute to slow-twitch fiber type specificity during myogenesis and in regenerating muscles. Binds troponin I slow-muscle fiber enhancer (USE B1). Binds specifically and with high affinity to the EFG sequences derived from the early enhancer of HOXC8. The polypeptide is General transcription factor II-I repeat domain-containing protein 1 (GTF2IRD1) (Homo sapiens (Human)).